The chain runs to 224 residues: UPF0758 protein Noc_0236 (224 aa).

Residues 102 to 224 (VLTDPQTTQR…TLSFAERGLL (123 aa)) form the MPN domain. H173, H175, and D186 together coordinate Zn(2+). The JAMM motif signature appears at 173 to 186 (HNHPSGVAEPSRAD).

It belongs to the UPF0758 family.

This is UPF0758 protein Noc_0236 from Nitrosococcus oceani (strain ATCC 19707 / BCRC 17464 / JCM 30415 / NCIMB 11848 / C-107).